The primary structure comprises 296 residues: Mycothiol acetyltransferase (296 aa).

N-acetyltransferase domains are found at residues 8-146 (RSPE…PPVE) and 151-296 (ISVR…GPPV). Glutamate 39 is a 1D-myo-inositol 2-(L-cysteinylamino)-2-deoxy-alpha-D-glucopyranoside binding site. 76–78 (VVT) contacts acetyl-CoA. Residues glutamate 178, lysine 220, and glutamate 228 each contribute to the 1D-myo-inositol 2-(L-cysteinylamino)-2-deoxy-alpha-D-glucopyranoside site. Acetyl-CoA is bound by residues 232-234 (VGV) and 239-245 (QGEGLGR). Tyrosine 266 is a binding site for 1D-myo-inositol 2-(L-cysteinylamino)-2-deoxy-alpha-D-glucopyranoside.

It belongs to the acetyltransferase family. MshD subfamily. In terms of assembly, monomer.

It catalyses the reaction 1D-myo-inositol 2-(L-cysteinylamino)-2-deoxy-alpha-D-glucopyranoside + acetyl-CoA = mycothiol + CoA + H(+). Its function is as follows. Catalyzes the transfer of acetyl from acetyl-CoA to desacetylmycothiol (Cys-GlcN-Ins) to form mycothiol. The chain is Mycothiol acetyltransferase from Kytococcus sedentarius (strain ATCC 14392 / DSM 20547 / JCM 11482 / CCUG 33030 / NBRC 15357 / NCTC 11040 / CCM 314 / 541) (Micrococcus sedentarius).